A 290-amino-acid polypeptide reads, in one-letter code: 4-hydroxybenzoate octaprenyltransferase (290 aa).

Transmembrane regions (helical) follow at residues 23-43 (IGALLLLWPTLWALWVATPGM), 46-66 (LWILAVFVAGVWLMRAAGCVV), 99-119 (LFVVLVLLAFLLVLTLNAMTI), 141-161 (LPQVVLGAAFGWSIPMAFAAV), 163-183 (ESLPLSCWLMFLANILWAVAY), 212-232 (TLIIGILQLGVMALMALIGWL), 233-253 (NGLGWGYYWAVLVAGALFVYQ), and 268-288 (AFMNNNYVGLVLFLGLAMSYW).

This sequence belongs to the UbiA prenyltransferase family. Requires Mg(2+) as cofactor.

Its subcellular location is the cell inner membrane. The catalysed reaction is all-trans-octaprenyl diphosphate + 4-hydroxybenzoate = 4-hydroxy-3-(all-trans-octaprenyl)benzoate + diphosphate. The protein operates within cofactor biosynthesis; ubiquinone biosynthesis. In terms of biological role, catalyzes the prenylation of para-hydroxybenzoate (PHB) with an all-trans polyprenyl group. Mediates the second step in the final reaction sequence of ubiquinone-8 (UQ-8) biosynthesis, which is the condensation of the polyisoprenoid side chain with PHB, generating the first membrane-bound Q intermediate 3-octaprenyl-4-hydroxybenzoate. The protein is 4-hydroxybenzoate octaprenyltransferase of Salmonella typhi.